The following is a 143-amino-acid chain: Transcriptional regulator MraZ (143 aa).

SpoVT-AbrB domains are found at residues 5–47 (EYQH…PQDE) and 76–119 (ATEC…SKER).

This sequence belongs to the MraZ family. In terms of assembly, forms oligomers.

The protein localises to the cytoplasm. Its subcellular location is the nucleoid. The polypeptide is Transcriptional regulator MraZ (Brevibacillus brevis (strain 47 / JCM 6285 / NBRC 100599)).